Here is a 660-residue protein sequence, read N- to C-terminus: Septation initiation protein sid4 (660 aa).

3 disordered regions span residues T79 to F243, S368 to K396, and R459 to N503. Polar residues-rich tracts occupy residues S125–Y138, S156–K176, and R222–F243. The span at S384–K396 shows a compositional bias: basic and acidic residues. Composition is skewed to polar residues over residues R459–K480 and K488–S497.

In terms of assembly, homodimer. Interacts with cdc11, sad1, plo1 and dma1.

Its subcellular location is the cytoplasm. It is found in the cytoskeleton. The protein localises to the microtubule organizing center. The protein resides in the spindle pole body. Required for activation of the spg1 GTPase signaling cascade which leads to the initiation of septation and the subsequent termination of mitosis. May act as a scaffold at the spindle pole body to which other components of the spg1 signaling cascade attach. In Schizosaccharomyces pombe (strain 972 / ATCC 24843) (Fission yeast), this protein is Septation initiation protein sid4 (sid4).